Reading from the N-terminus, the 357-residue chain is 3-isopropylmalate dehydrogenase (357 aa).

76-89 contributes to the NAD(+) binding site; that stretch reads GPQWDTIDPALRPE. Substrate-binding residues include arginine 96, arginine 106, arginine 134, and aspartate 224. The Mg(2+) site is built by aspartate 224, aspartate 248, and aspartate 252. NAD(+) is bound at residue 282-294; that stretch reads GSAPDIAGQGVAN.

This sequence belongs to the isocitrate and isopropylmalate dehydrogenases family. LeuB type 1 subfamily. In terms of assembly, homodimer. Requires Mg(2+) as cofactor. It depends on Mn(2+) as a cofactor.

It localises to the cytoplasm. It carries out the reaction (2R,3S)-3-isopropylmalate + NAD(+) = 4-methyl-2-oxopentanoate + CO2 + NADH. The protein operates within amino-acid biosynthesis; L-leucine biosynthesis; L-leucine from 3-methyl-2-oxobutanoate: step 3/4. Functionally, catalyzes the oxidation of 3-carboxy-2-hydroxy-4-methylpentanoate (3-isopropylmalate) to 3-carboxy-4-methyl-2-oxopentanoate. The product decarboxylates to 4-methyl-2 oxopentanoate. The polypeptide is 3-isopropylmalate dehydrogenase (Xylella fastidiosa (strain 9a5c)).